The sequence spans 213 residues: Adenylate kinase (213 aa).

10–15 (GAGKGT) is a binding site for ATP. Positions 30–59 (STGNLLRDEVKSKTDLGVDIEKLISNGKFV) are NMP. Residues Thr-31, Arg-36, 57–59 (KFV), 85–88 (GYPR), and Gln-92 contribute to the AMP site. The interval 126–162 (GRMTCEKCNMTLNEYFNKEQIELHPCGVEHLKKRKDD) is LID. Residue Arg-127 coordinates ATP. Arg-159 and Arg-170 together coordinate AMP. An ATP-binding site is contributed by Gly-198.

The protein belongs to the adenylate kinase family. Monomer.

It localises to the cytoplasm. It catalyses the reaction AMP + ATP = 2 ADP. The protein operates within purine metabolism; AMP biosynthesis via salvage pathway; AMP from ADP: step 1/1. Catalyzes the reversible transfer of the terminal phosphate group between ATP and AMP. Plays an important role in cellular energy homeostasis and in adenine nucleotide metabolism. This chain is Adenylate kinase, found in Pelagibacter ubique (strain HTCC1062).